The following is a 39-amino-acid chain: Photosystem II reaction center protein L (39 aa).

The chain crosses the membrane as a helical span at residues Ser18–Phe38.

Belongs to the PsbL family. In terms of assembly, PSII is composed of 1 copy each of membrane proteins PsbA, PsbB, PsbC, PsbD, PsbE, PsbF, PsbH, PsbI, PsbJ, PsbK, PsbL, PsbM, PsbT, PsbX, PsbY, Psb30/Ycf12, peripheral proteins PsbO, CyanoQ (PsbQ), PsbU, PsbV and a large number of cofactors. It forms dimeric complexes.

It localises to the cellular thylakoid membrane. One of the components of the core complex of photosystem II (PSII). PSII is a light-driven water:plastoquinone oxidoreductase that uses light energy to abstract electrons from H(2)O, generating O(2) and a proton gradient subsequently used for ATP formation. It consists of a core antenna complex that captures photons, and an electron transfer chain that converts photonic excitation into a charge separation. This subunit is found at the monomer-monomer interface and is required for correct PSII assembly and/or dimerization. The polypeptide is Photosystem II reaction center protein L (Prochlorococcus marinus (strain NATL2A)).